The primary structure comprises 257 residues: Enterotoxin type E (257 aa).

The signal sequence occupies residues methionine 1–lysine 27. A disulfide bridge connects residues cysteine 120 and cysteine 130. Histidine 211, histidine 249, and aspartate 251 together coordinate Zn(2+).

It belongs to the staphylococcal/streptococcal toxin family. In terms of assembly, interacts with host MHC class II molecules composed of alpha/HLA-DRA and beta/HLA-DRB1 chains. Interacts with host T-cell receptor beta variable TRBV7-9. Zn(2+) serves as cofactor.

The protein localises to the secreted. Functionally, staphylococcal enterotoxin that activates the host immune system by binding as unprocessed molecules to major histocompatibility (MHC) complex class II and T-cell receptor (TCR) molecules. In turn, this ternary complex activates a large number of T-lymphocytes initiating a systemic release of pro-inflammatory cytokines. Also causes the intoxication staphylococcal food poisoning syndrome. The protein is Enterotoxin type E (entE) of Staphylococcus aureus.